The following is a 705-amino-acid chain: Endoglucanase (705 aa).

The first 23 residues, 1–23 (MKILKNCILLIIFGLLSTQLINA), serve as a signal peptide directing secretion. N75 carries N-linked (GlcNAc...) asparagine glycosylation. The active-site Nucleophile is the D85. Catalysis depends on residues H390, D428, and E437. A disordered region spans residues 455–556 (NPSSTSVPTT…TPTETPSSGE (102 aa)). Residues 462 to 552 (PTTTPTVTET…TPTVTPTETP (91 aa)) are compositionally biased toward low complexity. The tract at residues 463–552 (TTTPTVTETP…TPTVTPTETP (90 aa)) is pro/Thr repeats ('hinge') (Pro/Thr box).

It belongs to the glycosyl hydrolase 9 (cellulase E) family.

It catalyses the reaction Endohydrolysis of (1-&gt;4)-beta-D-glucosidic linkages in cellulose, lichenin and cereal beta-D-glucans.. Its function is as follows. May digest the spore cell wall during germination, to release the enclosed amoeba. This chain is Endoglucanase (celA), found in Dictyostelium discoideum (Social amoeba).